The following is a 287-amino-acid chain: Aspartate dehydrogenase domain-containing protein (287 aa).

Residues Ser-24 and Ser-172 each carry the phosphoserine modification.

This sequence belongs to the L-aspartate dehydrogenase family.

This chain is Aspartate dehydrogenase domain-containing protein, found in Mus musculus (Mouse).